The following is a 600-amino-acid chain: NADH-quinone oxidoreductase subunit C/D (600 aa).

The interval 1 to 190 is NADH dehydrogenase I subunit C; the sequence is MIDLMPKKNT…EPFFLNEQKE (190 aa). The tract at residues 214 to 600 is NADH dehydrogenase I subunit D; that stretch reads EFMFLNLGPN…IDFVMSDVDR (387 aa).

It in the N-terminal section; belongs to the complex I 30 kDa subunit family. The protein in the C-terminal section; belongs to the complex I 49 kDa subunit family. In terms of assembly, NDH-1 is composed of 13 different subunits. Subunits NuoB, CD, E, F, and G constitute the peripheral sector of the complex.

It is found in the cell membrane. The catalysed reaction is a quinone + NADH + 5 H(+)(in) = a quinol + NAD(+) + 4 H(+)(out). Functionally, NDH-1 shuttles electrons from NADH, via FMN and iron-sulfur (Fe-S) centers, to quinones in the respiratory chain. The immediate electron acceptor for the enzyme in this species is believed to be ubiquinone. Couples the redox reaction to proton translocation (for every two electrons transferred, four hydrogen ions are translocated across the cytoplasmic membrane), and thus conserves the redox energy in a proton gradient. This is NADH-quinone oxidoreductase subunit C/D from Buchnera aphidicola subsp. Acyrthosiphon pisum (strain Tuc7).